Reading from the N-terminus, the 161-residue chain is N5-carboxyaminoimidazole ribonucleotide mutase (161 aa).

S9, D12, and R39 together coordinate substrate.

This sequence belongs to the AIR carboxylase family. Class I subfamily.

The catalysed reaction is 5-carboxyamino-1-(5-phospho-D-ribosyl)imidazole + H(+) = 5-amino-1-(5-phospho-D-ribosyl)imidazole-4-carboxylate. Its pathway is purine metabolism; IMP biosynthesis via de novo pathway; 5-amino-1-(5-phospho-D-ribosyl)imidazole-4-carboxylate from 5-amino-1-(5-phospho-D-ribosyl)imidazole (N5-CAIR route): step 2/2. Catalyzes the conversion of N5-carboxyaminoimidazole ribonucleotide (N5-CAIR) to 4-carboxy-5-aminoimidazole ribonucleotide (CAIR). The protein is N5-carboxyaminoimidazole ribonucleotide mutase of Vibrio vulnificus (strain CMCP6).